The sequence spans 45 residues: Large ribosomal subunit protein bL34 (45 aa).

Basic residues-rich tracts occupy residues 1–15 (MKAK…RKRA) and 22–45 (MKTK…IAIK). The tract at residues 1–45 (MKAKSHLSNKKRKRASGFLARMKTKAGRKILARRRAKGRKRIAIK) is disordered.

Belongs to the bacterial ribosomal protein bL34 family.

The sequence is that of Large ribosomal subunit protein bL34 from Sulfurihydrogenibium sp. (strain YO3AOP1).